Consider the following 340-residue polypeptide: Uridine nucleosidase (340 aa).

His-254 is a catalytic residue.

It belongs to the IUNH family.

The protein resides in the cytoplasm. The protein localises to the nucleus. It catalyses the reaction uridine + H2O = D-ribose + uracil. Also acts on cytidine. In Saccharomyces cerevisiae (strain ATCC 204508 / S288c) (Baker's yeast), this protein is Uridine nucleosidase (URH1).